Here is a 383-residue protein sequence, read N- to C-terminus: BRISC and BRCA1-A complex member 2 (383 aa).

At methionine 1 the chain carries N-acetylmethionine. Residue serine 2 is modified to Phosphoserine. 2 UEV-like regions span residues 30 to 147 (DATN…TLLE) and 275 to 364 (IAAF…RAKA).

Belongs to the BABAM2 family. In terms of assembly, component of the ARISC complex, at least composed of UIMC1/RAP80, ABRAXAS1, BRCC3/BRCC36, BABAM2 and BABAM1/NBA1. Component of the BRCA1-A complex, at least composed of BRCA1, BARD1, UIMC1/RAP80, ABRAXAS1, BRCC3/BRCC36, BABAM2 and BABAM1/NBA1. In the BRCA1-A complex, interacts directly with ABRAXAS1, BRCC3/BRCC36 and BABAM1/NBA1. Binds polyubiquitin. Component of the BRISC complex, at least composed of ABRAXAS2, BRCC3/BRCC36, BABAM2 and BABAM1/NBA1. Identified in a complex with SHMT2 and the other subunits of the BRISC complex. Component of the BRCA1/BRCA2 containing complex (BRCC), which also contains BRCA1, BRCA2, BARD1, BRCC3/BRCC36 and RAD51. BRCC is a ubiquitin E3 ligase complex that enhances cellular survival following DNA damage. May interact with FAS and TNFRSF1A.

The protein resides in the cytoplasm. The protein localises to the nucleus. Its function is as follows. Component of the BRCA1-A complex, a complex that specifically recognizes 'Lys-63'-linked ubiquitinated histones H2A and H2AX at DNA lesions sites, leading to target the BRCA1-BARD1 heterodimer to sites of DNA damage at double-strand breaks (DSBs). The BRCA1-A complex also possesses deubiquitinase activity that specifically removes 'Lys-63'-linked ubiquitin on histones H2A and H2AX. In the BRCA1-A complex, it acts as an adapter that bridges the interaction between BABAM1/NBA1 and the rest of the complex, thereby being required for the complex integrity and modulating the E3 ubiquitin ligase activity of the BRCA1-BARD1 heterodimer. Component of the BRISC complex, a multiprotein complex that specifically cleaves 'Lys-63'-linked ubiquitin in various substrates. Within the BRISC complex, acts as an adapter that bridges the interaction between BABAM1/NBA1 and the rest of the complex, thereby being required for the complex integrity. The BRISC complex is required for normal mitotic spindle assembly and microtubule attachment to kinetochores via its role in deubiquitinating NUMA1. The BRISC complex plays a role in interferon signaling via its role in the deubiquitination of the interferon receptor IFNAR1; deubiquitination increases IFNAR1 activity by enhancing its stability and cell surface expression. Down-regulates the response to bacterial lipopolysaccharide (LPS) via its role in IFNAR1 deubiquitination. May play a role in homeostasis or cellular differentiation in cells of neural, epithelial and germline origins. May also act as a death receptor-associated anti-apoptotic protein, which inhibits the mitochondrial apoptotic pathway. May regulate TNF-alpha signaling through its interactions with TNFRSF1A; however these effects may be indirect. This is BRISC and BRCA1-A complex member 2 from Rattus norvegicus (Rat).